Here is a 1423-residue protein sequence, read N- to C-terminus: DNA-directed RNA polymerase subunit beta' (1423 aa).

Zn(2+)-binding residues include Cys71, Cys73, Cys86, and Cys89. Residues Asp461, Asp463, and Asp465 each contribute to the Mg(2+) site. Residues Cys815, Cys889, Cys896, and Cys899 each coordinate Zn(2+).

Belongs to the RNA polymerase beta' chain family. The RNAP catalytic core consists of 2 alpha, 1 beta, 1 beta' and 1 omega subunit. When a sigma factor is associated with the core the holoenzyme is formed, which can initiate transcription. Mg(2+) is required as a cofactor. The cofactor is Zn(2+).

The enzyme catalyses RNA(n) + a ribonucleoside 5'-triphosphate = RNA(n+1) + diphosphate. In terms of biological role, DNA-dependent RNA polymerase catalyzes the transcription of DNA into RNA using the four ribonucleoside triphosphates as substrates. The chain is DNA-directed RNA polymerase subunit beta' from Actinobacillus pleuropneumoniae serotype 7 (strain AP76).